The chain runs to 248 residues: Thioesterase FSL2 (248 aa).

Catalysis depends on charge relay system residues Ser-125, Asp-195, and His-223.

Belongs to the LovG family.

The protein operates within secondary metabolite biosynthesis. Its function is as follows. Thioesterase; part of the gene cluster that mediates the biosynthesis of fusarielins F, G and H, decaketide compounds with 5 methylations and a decaline core that act as mycoestrogens as they stimulate growth of MCF-7 breast cancer cells. The initial compound in the pathway is produced by the reducing polyketide synthase FSL1. FSL1 lacks an active enoyl reductase (ER) domain and biosynthesis of fusarielins relies on the trans-acting enoyl reductase FSL5, before it is released through hydrolysis catalyzed by the thioesterase FSL2. Fusarielins F, G, and H have a C11=C12 cis double bond and is fully reduced between C10 and C11 and between C12 and C13. FSL3 can be involved in the formation of the C11=C12 cis double bond by moving a hypothetical C10=C11 or C12=C13 trans double bond to form prefusarielin. Prefusarielin is oxygenated at C15 and C16 by the cytochrome P450 monooxygenase FSL4, resulting in fusarielin F, which subsequently is epoxidized into fusarielin G by the same enzyme. The final step in the pathway is a reduction of the carboxylic acid moiety to yield fusarielin H via a still undetermined mechanism. The sequence is that of Thioesterase FSL2 from Gibberella zeae (strain ATCC MYA-4620 / CBS 123657 / FGSC 9075 / NRRL 31084 / PH-1) (Wheat head blight fungus).